The sequence spans 174 residues: Ribosome maturation factor RimP (174 aa).

It belongs to the RimP family.

The protein resides in the cytoplasm. In terms of biological role, required for maturation of 30S ribosomal subunits. This chain is Ribosome maturation factor RimP, found in Bdellovibrio bacteriovorus (strain ATCC 15356 / DSM 50701 / NCIMB 9529 / HD100).